Here is a 321-residue protein sequence, read N- to C-terminus: Methionyl-tRNA formyltransferase (321 aa).

113-116 (SILP) is a (6S)-5,6,7,8-tetrahydrofolate binding site.

The protein belongs to the Fmt family.

It catalyses the reaction L-methionyl-tRNA(fMet) + (6R)-10-formyltetrahydrofolate = N-formyl-L-methionyl-tRNA(fMet) + (6S)-5,6,7,8-tetrahydrofolate + H(+). In terms of biological role, attaches a formyl group to the free amino group of methionyl-tRNA(fMet). The formyl group appears to play a dual role in the initiator identity of N-formylmethionyl-tRNA by promoting its recognition by IF2 and preventing the misappropriation of this tRNA by the elongation apparatus. The sequence is that of Methionyl-tRNA formyltransferase from Vibrio atlanticus (strain LGP32) (Vibrio splendidus (strain Mel32)).